Here is a 184-residue protein sequence, read N- to C-terminus: Rhox homeobox family member 1 (184 aa).

The segment at 26-104 (QLGAASSAEG…GPQPENMQPR (79 aa)) is disordered. Low complexity predominate over residues 88 to 99 (PAQAAMEGPQPE). The homeobox DNA-binding region spans 103-162 (PRTRRTKFTLLQVEELESVFRHTQYPDVPTRRELAENLGVTEDKVRVWFKNKRARCRRHQ). The Nuclear localization signal signature appears at 155–164 (RARCRRHQRE).

The protein belongs to the paired-like homeobox family. PEPP subfamily. As to quaternary structure, does not interact with itself. As to expression, ovary, testis and epididymis. Also detected in the prostate and the mammary gland. Expressed in many tumor cell lines derived from acute lymphocytic leukemia, prostate, endometrial adenocarcinoma, melanoma, bladder carcinoma, colon carcinoma, erythroleukemia and breast carcinoma. Not expressed in placenta. In testis, mainly expressed in germ cells, but also detected in somatic cells such as Sertoli cells, Leydig cells and peritubular cells.

It is found in the nucleus. Functionally, transcription factor maybe involved in reproductive processes. Modulates expression of target genes encoding proteins involved in processes relevant to spermatogenesis. The protein is Rhox homeobox family member 1 of Homo sapiens (Human).